A 300-amino-acid chain; its full sequence is N-acetylmuramic acid 6-phosphate etherase (300 aa).

Residues 57-220 (VAAALRAGGR…STGAMIRIGK (164 aa)) form the SIS domain. E85 functions as the Proton donor in the catalytic mechanism. E116 is an active-site residue.

This sequence belongs to the GCKR-like family. MurNAc-6-P etherase subfamily. As to quaternary structure, homodimer.

It catalyses the reaction N-acetyl-D-muramate 6-phosphate + H2O = N-acetyl-D-glucosamine 6-phosphate + (R)-lactate. It participates in amino-sugar metabolism; 1,6-anhydro-N-acetylmuramate degradation. The protein operates within amino-sugar metabolism; N-acetylmuramate degradation. It functions in the pathway cell wall biogenesis; peptidoglycan recycling. In terms of biological role, specifically catalyzes the cleavage of the D-lactyl ether substituent of MurNAc 6-phosphate, producing GlcNAc 6-phosphate and D-lactate. Together with AnmK, is also required for the utilization of anhydro-N-acetylmuramic acid (anhMurNAc) either imported from the medium or derived from its own cell wall murein, and thus plays a role in cell wall recycling. The polypeptide is N-acetylmuramic acid 6-phosphate etherase (Klebsiella aerogenes (Enterobacter aerogenes)).